The sequence spans 460 residues: Serine hydroxymethyltransferase, cytosolic (460 aa).

Lys244 is modified (N6-(pyridoxal phosphate)lysine).

The protein belongs to the SHMT family. In terms of assembly, homotetramer. It depends on pyridoxal 5'-phosphate as a cofactor.

It localises to the cytoplasm. The catalysed reaction is (6R)-5,10-methylene-5,6,7,8-tetrahydrofolate + glycine + H2O = (6S)-5,6,7,8-tetrahydrofolate + L-serine. The protein operates within one-carbon metabolism; tetrahydrofolate interconversion. Interconversion of serine and glycine. The chain is Serine hydroxymethyltransferase, cytosolic (SHMT-1) from Encephalitozoon cuniculi (strain GB-M1) (Microsporidian parasite).